A 418-amino-acid polypeptide reads, in one-letter code: Actin-like protein 7B (418 aa).

The segment at 1-42 is disordered; the sequence is MATKNSPSPKPMGTAQGDPGEAGTLPAPEAAGIRDTGSTQLK. A Phosphoserine modification is found at S8.

The protein belongs to the actin family. As to expression, testis specific.

The protein resides in the cytoplasm. Its subcellular location is the cytoskeleton. This chain is Actin-like protein 7B (Actl7b), found in Mus musculus (Mouse).